We begin with the raw amino-acid sequence, 174 residues long: Adenine phosphoribosyltransferase (174 aa).

This sequence belongs to the purine/pyrimidine phosphoribosyltransferase family. In terms of assembly, homodimer.

It is found in the cytoplasm. It catalyses the reaction AMP + diphosphate = 5-phospho-alpha-D-ribose 1-diphosphate + adenine. It participates in purine metabolism; AMP biosynthesis via salvage pathway; AMP from adenine: step 1/1. Functionally, catalyzes a salvage reaction resulting in the formation of AMP, that is energically less costly than de novo synthesis. The chain is Adenine phosphoribosyltransferase from Mycobacterium sp. (strain JLS).